A 169-amino-acid polypeptide reads, in one-letter code: Glycine-rich RNA-binding protein 8 (169 aa).

In terms of domain architecture, RRM spans 6-84; that stretch reads YRCFVGGLAW…RVITVNEAQS (79 aa). Arg47 is modified (ADP-ribosylarginine; by HopU1). Residues 80–99 are disordered; it reads NEAQSRGSGGGGGGRGGSGG. Positions 86–99 are enriched in gly residues; it reads GSGGGGGGRGGSGG. The tract at residues 86-168 is glycine-rich (GR) required for cell-to-cell movement; the sequence is GSGGGGGGRG…GGSYGGGGGG (83 aa). Residues 95-143 form a nuclear targeting sequence (M9) region; sequence GGSGGGYRSGGGGGYSGGGGGGYSGGGGGGYERRSGGYGSGGGGGGRGY. The residue at position 103 (Ser103) is a Phosphoserine. A disordered region spans residues 130-169; sequence GGYGSGGGGGGRGYGGGGRREGGGYGGGDGGSYGGGGGGW.

The protein belongs to the GR-RBP family. In terms of assembly, interacts with TRN1. Binds to small phloem-mobile single-stranded RNAs (ss-sRNA, e.g. small interfering RNA (siRNA) and microRNA (miRNA)) in the phloeme exudate, including viral-derived sRNA (vsiRNA). Post-translationally, ADP-ribosylated by the Pseudomonas syringae type III effector HopU1. ADP-ribosylation reduces the ability of the protein to bind RNA. In terms of tissue distribution, ubiquitous.

The protein localises to the cytoplasm. Its subcellular location is the nucleus. The protein resides in the secreted. Functionally, plays a role in RNA transcription or processing during stress. Binds RNAs and DNAs sequence with a preference to single-stranded nucleic acids. Involved in mRNA alternative splicing of numerous targets by modulating splice site selection. Negatively regulates the circadian oscillations of its own transcript as well as RBG7 transcript. Forms an interlocked post-transcriptional negative feedback loop with the RBG7 autoregulatory circuit. Both proteins negatively autoregulate and reciprocally crossregulate by binding to their pre-mRNAs and promoting unproductive splicing coupled to degradation via the NMD pathway. Target of the Pseudomonas syringae type III effector HopU1. Mediates cell-to-cell trafficking of RNA interference (RNAi) signals (small RNAs (sRNA), e.g. small interfering RNA (siRNA) and microRNA (miRNA)) which regulate growth and development, as well as responses to environmental inputs, including pathogen attack; can compromise zucchini yellow mosaic virus (ZYMV) and tobacco rattle virus (TRV) infections at the early stage. The chain is Glycine-rich RNA-binding protein 8 from Arabidopsis thaliana (Mouse-ear cress).